Here is a 309-residue protein sequence, read N- to C-terminus: Homoserine O-succinyltransferase (309 aa).

Catalysis depends on Cys-142, which acts as the Acyl-thioester intermediate. 2 residues coordinate substrate: Lys-163 and Ser-192. His-235 (proton acceptor) is an active-site residue. Glu-237 is an active-site residue. Arg-249 provides a ligand contact to substrate.

It belongs to the MetA family.

The protein localises to the cytoplasm. The enzyme catalyses L-homoserine + succinyl-CoA = O-succinyl-L-homoserine + CoA. It participates in amino-acid biosynthesis; L-methionine biosynthesis via de novo pathway; O-succinyl-L-homoserine from L-homoserine: step 1/1. Functionally, transfers a succinyl group from succinyl-CoA to L-homoserine, forming succinyl-L-homoserine. The polypeptide is Homoserine O-succinyltransferase (Enterobacter sp. (strain 638)).